We begin with the raw amino-acid sequence, 281 residues long: Auxin-responsive protein IAA10 (281 aa).

Disordered stretches follow at residues 1–115 (MRGG…VVGW) and 130–157 (AKEN…EEGE). The span at 7 to 17 (GPTAGEPPGTE) shows a compositional bias: low complexity. Acidic residues predominate over residues 18–35 (AEAEEVEESSAGDDEELE). The short motif at 36 to 40 (LGLSL) is the EAR-like (transcriptional repression) element. Low complexity-rich tracts occupy residues 36–49 (LGLS…QQQQ) and 63–84 (PAAA…AAAA). Basic and acidic residues predominate over residues 133–157 (NTSETDTKKTATNESDVQKDKEEGE). The PB1 domain occupies 163–259 (AGWVKVNMDG…KRLRIMRTSD (97 aa)).

The protein belongs to the Aux/IAA family. In terms of assembly, homodimers and heterodimers. As to expression, highly expressed in flowers. Expressed in shoots.

It localises to the nucleus. Functionally, aux/IAA proteins are short-lived transcriptional factors that function as repressors of early auxin response genes at low auxin concentrations. This is Auxin-responsive protein IAA10 (IAA10) from Oryza sativa subsp. indica (Rice).